The primary structure comprises 256 residues: Small ribosomal subunit protein uS2 (256 aa).

Belongs to the universal ribosomal protein uS2 family.

The chain is Small ribosomal subunit protein uS2 from Streptococcus agalactiae serotype Ia (strain ATCC 27591 / A909 / CDC SS700).